The sequence spans 103 residues: Large ribosomal subunit protein uL24 (103 aa).

It belongs to the universal ribosomal protein uL24 family. Part of the 50S ribosomal subunit.

One of two assembly initiator proteins, it binds directly to the 5'-end of the 23S rRNA, where it nucleates assembly of the 50S subunit. Functionally, one of the proteins that surrounds the polypeptide exit tunnel on the outside of the subunit. This Geobacillus stearothermophilus (Bacillus stearothermophilus) protein is Large ribosomal subunit protein uL24.